The sequence spans 664 residues: UV-stimulated scaffold protein A homolog (664 aa).

The VHS-like stretch occupies residues 10–153 (KVIGLIEKAT…LKNTLKLKFP (144 aa)). Positions 148-180 (LKLKFPDLQANAARIQRERQEREMKTKEILRNK) form a coiled coil. 2 disordered regions span residues 330-350 (HGNEETNEEEEDIWEEDDGKV) and 362-403 (MRTQ…GNSL). Over residues 334-347 (ETNEEEEDIWEEDD) the composition is skewed to acidic residues. A compositionally biased stretch (polar residues) spans 363-374 (RTQQSENSSLPS). Basic and acidic residues predominate over residues 377 to 387 (EAKKSTSEARS). The span at 388–402 (NKVSNTKKVGSSGNS) shows a compositional bias: polar residues. The segment at 473–500 (TPPCRASLKKGGLCQRRDLRVCPFHGPI) adopts a UVSSA-type zinc-finger fold. Positions 476, 486, 494, and 497 each coordinate Zn(2+). Disordered regions lie at residues 514–546 (SPLDESENQTSSTSGTNQDVSMDETTSDSDPNQ) and 640–664 (VKGTNPQQLAQGNDEKCRDTSANQW). Composition is skewed to polar residues over residues 521–533 (NQTSSTSGTNQDV) and 640–650 (VKGTNPQQLAQ).

It belongs to the UVSSA family.

It localises to the chromosome. In Arabidopsis thaliana (Mouse-ear cress), this protein is UV-stimulated scaffold protein A homolog.